Reading from the N-terminus, the 612-residue chain is U-box domain-containing protein 11 (612 aa).

The stretch at 127–196 (DEVGEQVELA…LHFGEEEEKQ (70 aa)) forms a coiled coil. A U-box domain is found at 240 to 314 (TIPVDFLCPV…SRWCAEHNIE (75 aa)). ARM repeat units follow at residues 363–402 (TDNR…NLSI), 404–443 (ENNK…SLSL), 445–484 (DENK…NLCI), 486–526 (HGNK…VLAN), and 528–567 (QDAK…SLCK).

It carries out the reaction S-ubiquitinyl-[E2 ubiquitin-conjugating enzyme]-L-cysteine + [acceptor protein]-L-lysine = [E2 ubiquitin-conjugating enzyme]-L-cysteine + N(6)-ubiquitinyl-[acceptor protein]-L-lysine.. It functions in the pathway protein modification; protein ubiquitination. Functions as an E3 ubiquitin ligase. This chain is U-box domain-containing protein 11 (PUB11), found in Arabidopsis thaliana (Mouse-ear cress).